We begin with the raw amino-acid sequence, 310 residues long: Porphobilinogen deaminase (310 aa).

Cysteine 242 carries the S-(dipyrrolylmethanemethyl)cysteine modification.

This sequence belongs to the HMBS family. As to quaternary structure, monomer. The cofactor is dipyrromethane.

It catalyses the reaction 4 porphobilinogen + H2O = hydroxymethylbilane + 4 NH4(+). It functions in the pathway porphyrin-containing compound metabolism; protoporphyrin-IX biosynthesis; coproporphyrinogen-III from 5-aminolevulinate: step 2/4. Functionally, tetrapolymerization of the monopyrrole PBG into the hydroxymethylbilane pre-uroporphyrinogen in several discrete steps. The chain is Porphobilinogen deaminase from Psychromonas ingrahamii (strain DSM 17664 / CCUG 51855 / 37).